The primary structure comprises 424 residues: Adenosylmethionine-8-amino-7-oxononanoate aminotransferase (424 aa).

Trp-46 is a substrate binding site. A pyridoxal 5'-phosphate-binding site is contributed by 106-107 (GS). Residue Tyr-138 coordinates substrate. Asp-240 is a pyridoxal 5'-phosphate binding site. 2 residues coordinate substrate: Lys-269 and Gly-303. N6-(pyridoxal phosphate)lysine is present on Lys-269. 304–305 (HS) contributes to the pyridoxal 5'-phosphate binding site. Arg-391 lines the substrate pocket.

The protein belongs to the class-III pyridoxal-phosphate-dependent aminotransferase family. BioA subfamily. Homodimer. It depends on pyridoxal 5'-phosphate as a cofactor.

The protein localises to the cytoplasm. It carries out the reaction (8S)-8-amino-7-oxononanoate + S-adenosyl-L-methionine = S-adenosyl-4-methylsulfanyl-2-oxobutanoate + (7R,8S)-7,8-diammoniononanoate. Its pathway is cofactor biosynthesis; biotin biosynthesis; 7,8-diaminononanoate from 8-amino-7-oxononanoate (SAM route): step 1/1. Catalyzes the transfer of the alpha-amino group from S-adenosyl-L-methionine (SAM) to 7-keto-8-aminopelargonic acid (KAPA) to form 7,8-diaminopelargonic acid (DAPA). It is the only aminotransferase known to utilize SAM as an amino donor. Complements a bioU deletion in Synechocystis PCC 6803. This is Adenosylmethionine-8-amino-7-oxononanoate aminotransferase from Synechococcus elongatus (strain ATCC 33912 / PCC 7942 / FACHB-805) (Anacystis nidulans R2).